The primary structure comprises 668 residues: DNA-directed RNA polymerase subunit beta' (668 aa).

Residues Cys-71, Cys-73, Cys-91, and Cys-94 each coordinate Zn(2+). Mg(2+) contacts are provided by Asp-505, Asp-507, and Asp-509.

This sequence belongs to the RNA polymerase beta' chain family. RpoC1 subfamily. In plastids the minimal PEP RNA polymerase catalytic core is composed of four subunits: alpha, beta, beta', and beta''. When a (nuclear-encoded) sigma factor is associated with the core the holoenzyme is formed, which can initiate transcription. The cofactor is Mg(2+). Zn(2+) is required as a cofactor.

The protein resides in the plastid. It localises to the chloroplast. The enzyme catalyses RNA(n) + a ribonucleoside 5'-triphosphate = RNA(n+1) + diphosphate. DNA-dependent RNA polymerase catalyzes the transcription of DNA into RNA using the four ribonucleoside triphosphates as substrates. The chain is DNA-directed RNA polymerase subunit beta' from Mesostigma viride (Green alga).